The primary structure comprises 534 residues: Lariat debranching enzyme (534 aa).

4 residues coordinate a divalent metal cation: cysteine 8, histidine 10, aspartate 39, and asparagine 84. A lariat recognition loop region spans residues 124 to 154 (SGIFKGHDFLRGHHEFPPYTDSTCRSVYHVR). 3 residues coordinate a divalent metal cation: histidine 174, histidine 226, and histidine 228. Disordered regions lie at residues 242-275 (KLGD…PPPS) and 501-534 (TETP…AQED).

This sequence belongs to the lariat debranching enzyme family. It depends on Fe(2+) as a cofactor. The cofactor is Zn(2+). Requires Mn(2+) as cofactor.

The protein resides in the nucleus. With respect to regulation, active in presence of diverse metals including Fe(2+), Zn(2+), Mn(2+). Binds two metal cations in two adjacent alpha and beta metal-binding pockets. In terms of biological role, cleaves the 2'-5' phosphodiester linkage at the branch point of lariat intron pre-mRNAs after splicing and converts them into linear molecules that are subsequently degraded. It thereby facilitates ribonucleotide turnover. This Drosophila melanogaster (Fruit fly) protein is Lariat debranching enzyme (ldbr).